The following is a 309-amino-acid chain: tRNA dimethylallyltransferase (309 aa).

10 to 17 (GPTASGKT) provides a ligand contact to ATP. Position 12-17 (12-17 (TASGKT)) interacts with substrate. Interaction with substrate tRNA stretches follow at residues 35 to 38 (DSAL) and 240 to 245 (RCVGYR).

It belongs to the IPP transferase family. Monomer. The cofactor is Mg(2+).

It catalyses the reaction adenosine(37) in tRNA + dimethylallyl diphosphate = N(6)-dimethylallyladenosine(37) in tRNA + diphosphate. Catalyzes the transfer of a dimethylallyl group onto the adenine at position 37 in tRNAs that read codons beginning with uridine, leading to the formation of N6-(dimethylallyl)adenosine (i(6)A). The sequence is that of tRNA dimethylallyltransferase from Baumannia cicadellinicola subsp. Homalodisca coagulata.